The chain runs to 349 residues: Protein DMR6-LIKE OXYGENASE 1 (349 aa).

The 100-residue stretch at 197 to 296 folds into the Fe2OG dioxygenase domain; it reads HAQHMAFNYY…RLSIPTFYFP (100 aa). 2-oxoglutarate is bound at residue tyrosine 206. Histidine 221, aspartate 223, and histidine 277 together coordinate Fe cation. 2 residues coordinate 2-oxoglutarate: arginine 287 and serine 289.

It belongs to the iron/ascorbate-dependent oxidoreductase family. The cofactor is L-ascorbate. Requires Fe(2+) as cofactor.

It catalyses the reaction salicylate + NADH + O2 + H(+) = 2,3-dihydroxybenzoate + NAD(+) + H2O. In terms of biological role, converts salicylic acid (SA) to both 2,3-dihydroxybenzoic acid (2,3-DHBA) and 2,5-DHBA in vitro but only 2,3-DHBA in vivo. Component of a negative feedback regulation system of SA levels during senescence. Regulates both onset and progression of leaf senescence. Negative regulator of defense against Hyaloperonospora arabidopsidis. Its function is as follows. (Microbial infection) Confers susceptibility to the downy mildew pathogen Hyaloperonospora arabidopsidis. The protein is Protein DMR6-LIKE OXYGENASE 1 of Arabidopsis thaliana (Mouse-ear cress).